Reading from the N-terminus, the 306-residue chain is TnpB-like protein aq_aa05 (306 aa).

Residues Cys-213, Cys-216, Cys-234, and Cys-237 each contribute to the Zn(2+) site.

Belongs to the transposase 35 family.

In Aquifex aeolicus (strain VF5), this protein is TnpB-like protein aq_aa05.